Reading from the N-terminus, the 332-residue chain is Beta-1,3-N-acetylglucosaminyltransferase radical fringe (332 aa).

Residues Met1 to Arg6 lie on the Cytoplasmic side of the membrane. The helical; Signal-anchor for type II membrane protein transmembrane segment at Val7–Leu29 threads the bilayer. Over Pro30–Gln332 the chain is Lumenal. A substrate-binding site is contributed by Arg75. An N-linked (GlcNAc...) asparagine glycan is attached at Asn114. 2 disulfide bridges follow: Cys115/Cys126 and Cys144/Cys208. Asp148 lines the substrate pocket. Asp149 contributes to the Mn(2+) binding site. The active site involves Asp238. Residue His262 participates in Mn(2+) binding. Residues Cys312 and Cys321 are joined by a disulfide bond.

The protein belongs to the glycosyltransferase 31 family. Mn(2+) serves as cofactor. Detected in all the examined tissues (12.5 dpc). High expression found in adult brain.

It localises to the golgi apparatus membrane. It carries out the reaction 3-O-(alpha-L-fucosyl)-L-threonyl-[EGF-like domain protein] + UDP-N-acetyl-alpha-D-glucosamine = 3-O-(N-acetyl-beta-D-glucosaminyl-(1-&gt;3)-alpha-L-fucosyl)-L-threonyl-[EGF-like domain protein] + UDP + H(+). The enzyme catalyses 3-O-(alpha-L-fucosyl)-L-seryl-[EGF-like domain protein] + UDP-N-acetyl-alpha-D-glucosamine = 3-O-(N-acetyl-beta-D-glucosaminyl-(1-&gt;3)-alpha-L-fucosyl)-L-seryl-[EGF-like domain protein] + UDP + H(+). Functionally, glycosyltransferase that initiates the elongation of O-linked fucose residues attached to EGF-like repeats in the extracellular domain of Notch molecules. Modulates NOTCH1 activity by modifying O-fucose residues at specific EGF-like domains resulting in enhancement of NOTCH1 activation by DLL1 and JAG1. May be involved in limb formation and in neurogenesis. In Mus musculus (Mouse), this protein is Beta-1,3-N-acetylglucosaminyltransferase radical fringe.